The primary structure comprises 89 residues: Venom peptide BmKAPI (89 aa).

Residues 1–22 (MKFVFASFALFVIFLCFSQSLS) form the signal peptide. Intrachain disulfides connect C28–C66, C37–C62, C41–C55, C46–C86, and C68–C80. The TIL domain maps to 28-86 (CRDNEVFDNCISNCGPPRCSNILNTYPCTNLGPLCTPGCKCKDGRVYDNQGRCVLQTEC).

This sequence belongs to the serine protease inhibitor-like (TIL domain-containing) family. Expressed by the venom gland.

It localises to the secreted. Its function is as follows. Serine protease inhibitor. This Olivierus martensii (Manchurian scorpion) protein is Venom peptide BmKAPI.